The primary structure comprises 978 residues: uncharacterized protein (978 aa).

The N-terminal stretch at 1 to 27 (MHSWKKKLVVSQLALACTLAITSQANA) is a signal peptide. An Autotransporter domain is found at 713 to 978 (GLADNGGAWV…SANVGVKYTW (266 aa)).

This is an uncharacterized protein from Salmonella typhimurium (strain LT2 / SGSC1412 / ATCC 700720).